Reading from the N-terminus, the 111-residue chain is Large ribosomal subunit protein uL22 (111 aa).

The protein belongs to the universal ribosomal protein uL22 family. As to quaternary structure, part of the 50S ribosomal subunit.

Its function is as follows. This protein binds specifically to 23S rRNA; its binding is stimulated by other ribosomal proteins, e.g. L4, L17, and L20. It is important during the early stages of 50S assembly. It makes multiple contacts with different domains of the 23S rRNA in the assembled 50S subunit and ribosome. Functionally, the globular domain of the protein is located near the polypeptide exit tunnel on the outside of the subunit, while an extended beta-hairpin is found that lines the wall of the exit tunnel in the center of the 70S ribosome. This chain is Large ribosomal subunit protein uL22, found in Xanthomonas euvesicatoria pv. vesicatoria (strain 85-10) (Xanthomonas campestris pv. vesicatoria).